Consider the following 199-residue polypeptide: Recombination protein RecR (199 aa).

A C4-type zinc finger spans residues C57 to C72. Residues G81–P176 enclose the Toprim domain.

The protein belongs to the RecR family.

Its function is as follows. May play a role in DNA repair. It seems to be involved in an RecBC-independent recombinational process of DNA repair. It may act with RecF and RecO. The polypeptide is Recombination protein RecR (Vibrio parahaemolyticus serotype O3:K6 (strain RIMD 2210633)).